Reading from the N-terminus, the 634-residue chain is DNA-directed RNA polymerase subunit gamma (634 aa).

Residues Cys-74, Cys-76, Cys-89, and Cys-92 each coordinate Zn(2+). Mg(2+) is bound by residues Asp-471, Asp-473, and Asp-475.

It belongs to the RNA polymerase beta' chain family. RpoC1 subfamily. As to quaternary structure, in cyanobacteria the RNAP catalytic core is composed of 2 alpha, 1 beta, 1 beta', 1 gamma and 1 omega subunit. When a sigma factor is associated with the core the holoenzyme is formed, which can initiate transcription. Mg(2+) is required as a cofactor. Zn(2+) serves as cofactor.

The enzyme catalyses RNA(n) + a ribonucleoside 5'-triphosphate = RNA(n+1) + diphosphate. DNA-dependent RNA polymerase catalyzes the transcription of DNA into RNA using the four ribonucleoside triphosphates as substrates. The chain is DNA-directed RNA polymerase subunit gamma from Prochlorococcus marinus (strain AS9601).